Reading from the N-terminus, the 87-residue chain is Phosphoribosyl-ATP pyrophosphatase (87 aa).

Belongs to the PRA-PH family.

It is found in the cytoplasm. The catalysed reaction is 1-(5-phospho-beta-D-ribosyl)-ATP + H2O = 1-(5-phospho-beta-D-ribosyl)-5'-AMP + diphosphate + H(+). The protein operates within amino-acid biosynthesis; L-histidine biosynthesis; L-histidine from 5-phospho-alpha-D-ribose 1-diphosphate: step 2/9. This Leifsonia xyli subsp. xyli (strain CTCB07) protein is Phosphoribosyl-ATP pyrophosphatase.